A 298-amino-acid chain; its full sequence is Tyrosine recombinase XerC (298 aa).

In terms of domain architecture, Core-binding (CB) spans 2–88; sequence TDLHTDVERY…ALRSFFDWLV (87 aa). In terms of domain architecture, Tyr recombinase spans 109–288; that stretch reads HLPKNIDVDD…DFQHLASVYD (180 aa). Active-site residues include Arg-148, Lys-172, His-240, Arg-243, and His-266. The active-site O-(3'-phospho-DNA)-tyrosine intermediate is Tyr-275.

This sequence belongs to the 'phage' integrase family. XerC subfamily. In terms of assembly, forms a cyclic heterotetrameric complex composed of two molecules of XerC and two molecules of XerD, in which XerC interacts with XerD via its C-terminal region, XerD interacts with XerC via its C-terminal region and so on.

It localises to the cytoplasm. Its activity is regulated as follows. FtsK may regulate the catalytic switch between XerC and XerD in the heterotetrameric complex during the two steps of the recombination process. Functionally, site-specific tyrosine recombinase, which acts by catalyzing the cutting and rejoining of the recombining DNA molecules. Binds cooperatively to specific DNA consensus sequences that are separated from XerD binding sites by a short central region, forming the heterotetrameric XerC-XerD complex that recombines DNA substrates. The complex is essential to convert dimers of the bacterial chromosome into monomers to permit their segregation at cell division. It also contributes to the segregational stability of plasmids. In the complex XerC specifically exchanges the top DNA strands. The chain is Tyrosine recombinase XerC from Escherichia coli O45:K1 (strain S88 / ExPEC).